The sequence spans 149 residues: Putative pre-16S rRNA nuclease (149 aa).

Belongs to the YqgF nuclease family.

The protein localises to the cytoplasm. Functionally, could be a nuclease involved in processing of the 5'-end of pre-16S rRNA. The chain is Putative pre-16S rRNA nuclease from Burkholderia lata (strain ATCC 17760 / DSM 23089 / LMG 22485 / NCIMB 9086 / R18194 / 383).